Consider the following 585-residue polypeptide: Cytidine monophosphate-N-acetylneuraminic acid hydroxylase (585 aa).

The region spanning 9-107 is the Rieske domain; it reads LSPVEVANLK…VEMDENNRLL (99 aa). [2Fe-2S] cluster contacts are provided by cysteine 49, histidine 51, cysteine 70, and histidine 73.

This sequence belongs to the CMP-Neu5Ac hydroxylase family. It depends on [2Fe-2S] cluster as a cofactor.

The protein localises to the cytoplasm. The enzyme catalyses CMP-N-acetyl-beta-neuraminate + 2 Fe(II)-[cytochrome b5] + O2 + 2 H(+) = CMP-N-glycoloyl-beta-neuraminate + 2 Fe(III)-[cytochrome b5] + H2O. It participates in amino-sugar metabolism; N-acetylneuraminate metabolism. Sialic acids are components of carbohydrate chains of glycoconjugates and are involved in cell-cell recognition and cell-pathogen interactions. Catalyzes the conversion of CMP-N-acetylneuraminic acid (CMP-Neu5Ac) into its hydroxylated derivative CMP-N-glycolylneuraminic acid (CMP-Neu5Gc), a sialic acid abundantly expressed at the surface of many cells. The polypeptide is Cytidine monophosphate-N-acetylneuraminic acid hydroxylase (CMAH) (Pongo pygmaeus (Bornean orangutan)).